The chain runs to 479 residues: Catalase A (479 aa).

H63 is an active-site residue. Heme is bound at residue Y346.

It belongs to the catalase family. The cofactor is heme.

It localises to the peroxisome matrix. The catalysed reaction is 2 H2O2 = O2 + 2 H2O. Functionally, catalyzes the degradation of hydrogen peroxide (H(2)O(2)) generated by peroxisomal oxidases to water and oxygen, thereby protecting cells from the toxic effects of hydrogen peroxide. The sequence is that of Catalase A (catA) from Botryotinia fuckeliana (Noble rot fungus).